A 711-amino-acid polypeptide reads, in one-letter code: Progesterone receptor (711 aa).

Residues 1–347 form a modulating, Pro-Rich region; sequence MEDKSKQCLQ…YGFDALPRKI (347 aa). 2 NR C4-type zinc fingers span residues 348–368 and 384–408; these read CLIC…CGSC and CAGR…LKKC. The segment at residues 348 to 420 is a DNA-binding region (nuclear receptor); sequence CLICSDEASG…AGMVLGGRKF (73 aa). The NR LBD domain maps to 457–691; the sequence is QEVQYFPELL…EFPEMMTEVI (235 aa).

It belongs to the nuclear hormone receptor family. NR3 subfamily. As to expression, expressed in all tissues examined: highly expressed in testis and brain. Also expressed in heart, lung, liver, kidney, stomach and small intestine.

The protein localises to the nucleus. Functionally, the steroid hormones and their receptors are involved in the regulation of eukaryotic gene expression and affect cellular proliferation and differentiation in target tissues. This Rana dybowskii (Dybovsky's frog) protein is Progesterone receptor (pgr).